Reading from the N-terminus, the 410-residue chain is Sulfate adenylyltransferase (410 aa).

The protein belongs to the sulfate adenylyltransferase family.

It catalyses the reaction sulfate + ATP + H(+) = adenosine 5'-phosphosulfate + diphosphate. It functions in the pathway sulfur metabolism; hydrogen sulfide biosynthesis; sulfite from sulfate: step 1/3. This chain is Sulfate adenylyltransferase, found in Syntrophobacter fumaroxidans (strain DSM 10017 / MPOB).